The primary structure comprises 97 residues: Co-chaperonin GroES (97 aa).

The protein belongs to the GroES chaperonin family. As to quaternary structure, heptamer of 7 subunits arranged in a ring. Interacts with the chaperonin GroEL.

It localises to the cytoplasm. In terms of biological role, together with the chaperonin GroEL, plays an essential role in assisting protein folding. The GroEL-GroES system forms a nano-cage that allows encapsulation of the non-native substrate proteins and provides a physical environment optimized to promote and accelerate protein folding. GroES binds to the apical surface of the GroEL ring, thereby capping the opening of the GroEL channel. This is Co-chaperonin GroES from Oleispira antarctica.